Consider the following 547-residue polypeptide: Putative nitric oxide synthase (547 aa).

The segment covering 24 to 40 (QLAPNPSSFSPTRAAST) has biased composition (low complexity). Disordered regions lie at residues 24 to 57 (QLAP…SRGD) and 72 to 91 (VLAP…RKAL). Basic residues predominate over residues 81–91 (RRRRREKRKAL). One can recognise a CP-type G domain in the interval 167–343 (ADQLRDKLSY…LYDTPGVHLH (177 aa)).

The protein belongs to the TRAFAC class YlqF/YawG GTPase family. NOA1 subfamily.

The enzyme catalyses 2 L-arginine + 3 NADPH + 4 O2 + H(+) = 2 L-citrulline + 2 nitric oxide + 3 NADP(+) + 4 H2O. In terms of biological role, produces nitric oxide (NO) which is a messenger molecule involved in hormonal signaling and defense responses in plant. The chain is Putative nitric oxide synthase from Oryza sativa subsp. japonica (Rice).